Here is a 450-residue protein sequence, read N- to C-terminus: Phosphoglucosamine mutase (450 aa).

The Phosphoserine intermediate role is filled by Ser-97. Mg(2+) is bound by residues Ser-97, Asp-236, Asp-238, and Asp-240. Ser-97 bears the Phosphoserine mark.

This sequence belongs to the phosphohexose mutase family. Requires Mg(2+) as cofactor. Post-translationally, activated by phosphorylation.

It catalyses the reaction alpha-D-glucosamine 1-phosphate = D-glucosamine 6-phosphate. Catalyzes the conversion of glucosamine-6-phosphate to glucosamine-1-phosphate. The chain is Phosphoglucosamine mutase from Prochlorococcus marinus (strain AS9601).